We begin with the raw amino-acid sequence, 62 residues long: Large ribosomal subunit protein bL28 (62 aa).

It belongs to the bacterial ribosomal protein bL28 family.

The sequence is that of Large ribosomal subunit protein bL28 from Streptococcus mutans serotype c (strain ATCC 700610 / UA159).